The chain runs to 199 residues: uncharacterized protein (199 aa).

A run of 7 helical transmembrane segments spans residues 10–32, 37–59, 63–80, 83–100, 104–121, 126–148, and 163–185; these read LTSQ…FIGY, VYSA…INYY, LIVI…FALI, LGLI…GVYL, YQVY…INLF, LTVL…MGIT, and FDAI…TGII.

It localises to the cell membrane. This is an uncharacterized protein from Archaeoglobus fulgidus (strain ATCC 49558 / DSM 4304 / JCM 9628 / NBRC 100126 / VC-16).